A 492-amino-acid polypeptide reads, in one-letter code: 2-succinylbenzoate--CoA ligase (492 aa).

It belongs to the ATP-dependent AMP-binding enzyme family. MenE subfamily.

It carries out the reaction 2-succinylbenzoate + ATP + CoA = 2-succinylbenzoyl-CoA + AMP + diphosphate. The protein operates within quinol/quinone metabolism; 1,4-dihydroxy-2-naphthoate biosynthesis; 1,4-dihydroxy-2-naphthoate from chorismate: step 5/7. It participates in quinol/quinone metabolism; menaquinone biosynthesis. Its function is as follows. Converts 2-succinylbenzoate (OSB) to 2-succinylbenzoyl-CoA (OSB-CoA). This is 2-succinylbenzoate--CoA ligase from Staphylococcus aureus (strain MSSA476).